We begin with the raw amino-acid sequence, 111 residues long: UPF0060 membrane protein HCH_03337 (111 aa).

Helical transmembrane passes span leucine 8–isoleucine 28, serine 33–leucine 53, tyrosine 65–leucine 85, and phenylalanine 88–isoleucine 108.

This sequence belongs to the UPF0060 family.

The protein localises to the cell inner membrane. The protein is UPF0060 membrane protein HCH_03337 of Hahella chejuensis (strain KCTC 2396).